The following is a 272-amino-acid chain: Cerberus (272 aa).

The N-terminal stretch at 1–17 (MHLLLVQLLVLLPLGKA) is a signal peptide. 4 disulfides stabilise this stretch: Cys162–Cys209, Cys176–Cys223, Cys186–Cys239, and Cys190–Cys241. The CTCK domain occupies 162–246 (CRTVPFNQTI…EECQCMVKTE (85 aa)). N-linked (GlcNAc...) asparagine glycosylation is found at Asn168 and Asn222.

The protein belongs to the DAN family. In terms of assembly, forms monomers and predominantly dimers. N-glycosylated.

It is found in the secreted. In terms of biological role, cytokine that may play a role in anterior neural induction and somite formation during embryogenesis in part, through a BMP-inhibitory mechanism. Can regulate Nodal signaling during gastrulation as well as the formation and patterning of the primitive streak. In Mus musculus (Mouse), this protein is Cerberus (Cer1).